We begin with the raw amino-acid sequence, 629 residues long: Transmembrane 9 superfamily protein C1105.08 (629 aa).

Positions 1–26 are cleaved as a signal peptide; the sequence is MLLPSIPSCSFSFVVFVSVLLQTCFS. Over 27–266 the chain is Lumenal; that stretch reads FQLTPLSPKN…MHIESRQIRW (240 aa). The N-linked (GlcNAc...) asparagine glycan is linked to N157. Residues 267 to 287 traverse the membrane as a helical segment; the sequence is IFIIHSAIIDTFLIFVVSIIL. Residues 288–337 are Cytoplasmic-facing; that stretch reads YRTLNRDINKYNSAFVDQEDVQEDFGWKLVHGDVFRPPRRPMLFSILLGT. A helical membrane pass occupies residues 338–358; sequence GAQLLFMSSGIVLFAIFGIVA. Topologically, residues 359 to 364 are lumenal; it reads PSRRGS. The chain crosses the membrane as a helical span at residues 365-385; sequence LATATVALFIISGFVSGYVSA. Topologically, residues 386-401 are cytoplasmic; the sequence is LSYKLMQGMLRKRNLL. Residues 402–422 form a helical membrane-spanning segment; that stretch reads LTPFVVPGFMLAAALFFNMVF. The Lumenal segment spans residues 423–436; the sequence is WSKSSSSTVPFSSW. The helical transmembrane segment at 437-457 threads the bilayer; the sequence is LLLIFLYLLFTVPLSFVGSLI. Residues 458–488 are Cytoplasmic-facing; it reads GFRSREFVPPVRTNQIPRQIPSHSIWLSSFP. A helical membrane pass occupies residues 489 to 509; it reads SAIIGGSIPFLVILIELFSIL. Topologically, residues 510–519 are lumenal; the sequence is DSLWFHPLYF. A helical membrane pass occupies residues 520-544; that stretch reads MFGFSFFCFGILVTTCIMVSIITVY. The Cytoplasmic segment spans residues 545–558; it reads FQLCSENYNWWWRS. Residues 559 to 579 form a helical membrane-spanning segment; the sequence is FITPGFCGIYVFIFSVFYWFF. Residues 580–598 lie on the Lumenal side of the membrane; it reads KISSSSLATAVLYFGYSLL. Residues 599–619 form a helical membrane-spanning segment; it reads ISVLVFFLCGSVGFFGAFLFV. Topologically, residues 620–629 are cytoplasmic; it reads NKIYASIKID.

It belongs to the nonaspanin (TM9SF) (TC 9.A.2) family.

The protein localises to the golgi apparatus membrane. It localises to the vacuole membrane. This chain is Transmembrane 9 superfamily protein C1105.08, found in Schizosaccharomyces pombe (strain 972 / ATCC 24843) (Fission yeast).